A 335-amino-acid chain; its full sequence is Dihydroorotate dehydrogenase (quinone) (335 aa).

FMN is bound by residues 59-63 (AGLDK) and threonine 83. Substrate is bound at residue lysine 63. 108–112 (NRMGF) is a substrate binding site. The FMN site is built by asparagine 136 and asparagine 169. Residue asparagine 169 participates in substrate binding. Serine 172 functions as the Nucleophile in the catalytic mechanism. Asparagine 174 serves as a coordination point for substrate. Residues lysine 214 and threonine 242 each contribute to the FMN site. Residue 243–244 (NT) coordinates substrate. Residues glycine 265, glycine 294, and 315 to 316 (YS) each bind FMN.

Belongs to the dihydroorotate dehydrogenase family. Type 2 subfamily. In terms of assembly, monomer. It depends on FMN as a cofactor.

It localises to the cell membrane. The enzyme catalyses (S)-dihydroorotate + a quinone = orotate + a quinol. The protein operates within pyrimidine metabolism; UMP biosynthesis via de novo pathway; orotate from (S)-dihydroorotate (quinone route): step 1/1. In terms of biological role, catalyzes the conversion of dihydroorotate to orotate with quinone as electron acceptor. The chain is Dihydroorotate dehydrogenase (quinone) from Neisseria gonorrhoeae (strain ATCC 700825 / FA 1090).